The chain runs to 211 residues: Urease accessory protein UreG (211 aa).

11-18 (GPVGAGKT) contributes to the GTP binding site.

The protein belongs to the SIMIBI class G3E GTPase family. UreG subfamily. Homodimer. UreD, UreF and UreG form a complex that acts as a GTP-hydrolysis-dependent molecular chaperone, activating the urease apoprotein by helping to assemble the nickel containing metallocenter of UreC. The UreE protein probably delivers the nickel.

It localises to the cytoplasm. Functionally, facilitates the functional incorporation of the urease nickel metallocenter. This process requires GTP hydrolysis, probably effectuated by UreG. This is Urease accessory protein UreG from Actinobacillus pleuropneumoniae serotype 5b (strain L20).